Here is a 159-residue protein sequence, read N- to C-terminus: METNYSVIFMTIINFCILVAILKHFFWDKIKGIINERQDFVDEQLLKVDEDSEKARMYLLENQRILQTAKEEGKKITESQKEKANKVYDEIVEDANEEAKSLLERAKTDIQREKEKAEYEIKKQAVDLAIELSIKALEENIDESKHRELISNFITKVGM.

The helical transmembrane segment at 7-27 (VIFMTIINFCILVAILKHFFW) threads the bilayer.

The protein belongs to the ATPase B chain family. F-type ATPases have 2 components, F(1) - the catalytic core - and F(0) - the membrane proton channel. F(1) has five subunits: alpha(3), beta(3), gamma(1), delta(1), epsilon(1). F(0) has three main subunits: a(1), b(2) and c(10-14). The alpha and beta chains form an alternating ring which encloses part of the gamma chain. F(1) is attached to F(0) by a central stalk formed by the gamma and epsilon chains, while a peripheral stalk is formed by the delta and b chains.

It is found in the cell membrane. In terms of biological role, f(1)F(0) ATP synthase produces ATP from ADP in the presence of a proton or sodium gradient. F-type ATPases consist of two structural domains, F(1) containing the extramembraneous catalytic core and F(0) containing the membrane proton channel, linked together by a central stalk and a peripheral stalk. During catalysis, ATP synthesis in the catalytic domain of F(1) is coupled via a rotary mechanism of the central stalk subunits to proton translocation. Functionally, component of the F(0) channel, it forms part of the peripheral stalk, linking F(1) to F(0). The chain is ATP synthase subunit b from Clostridium botulinum (strain Alaska E43 / Type E3).